We begin with the raw amino-acid sequence, 103 residues long: Carboxysome shell protein CcmK2 (103 aa).

One can recognise a BMC domain in the interval 4-90 (AVGMIETRGF…PHENLEYVLP (87 aa)).

The protein belongs to the bacterial microcompartments protein family. CcmK subfamily. As to quaternary structure, homohexamer, might also make dodecamers. Interacts with full-length CcmM. Forms mixed heterohexamers of all possible stoichiometries with CcmK1, which might form dodecamers. Only very weak interactions with CcmK3 and CcmK4 were seen.

The protein resides in the carboxysome. Functionally, one of the shell proteins of the carboxysome, a polyhedral inclusion where RuBisCO (ribulose bisphosphate carboxylase, rbcL-rbcS) is sequestered. The central pore probably regulates metabolite flux. Hexamers make sheets that form the facets of the polyhedral carboxysome. The polypeptide is Carboxysome shell protein CcmK2 (Synechocystis sp. (strain ATCC 27184 / PCC 6803 / Kazusa)).